We begin with the raw amino-acid sequence, 136 residues long: MANFKVVVSDPKEARAYQIDIKDAEANALIGKSIGDVVDGSIFGLAGYKVQITGGCDGSGFVMKPDLPGPRRQRILTATGVGYVPKLPGQRRRKMMRGKEIAPDIVQVNAKVVEYGSKSIKALLGLETAEEAPAAE.

It belongs to the eukaryotic ribosomal protein eS6 family.

This Methanosarcina mazei (strain ATCC BAA-159 / DSM 3647 / Goe1 / Go1 / JCM 11833 / OCM 88) (Methanosarcina frisia) protein is Small ribosomal subunit protein eS6.